Here is a 339-residue protein sequence, read N- to C-terminus: Extracellular matrix protein-binding protein emp (339 aa).

The first 26 residues, 1–26 (MKKKLFVLTMSTLFATQLINSNHANA), serve as a signal peptide directing secretion.

The protein localises to the cell surface. Adhesin that binds to the host cell extracellular matrix proteins fibronectin, fibrinogen, collagen, and vitronectin. This is Extracellular matrix protein-binding protein emp (emp) from Staphylococcus aureus (strain bovine RF122 / ET3-1).